The primary structure comprises 99 residues: Aspartyl/glutamyl-tRNA(Asn/Gln) amidotransferase subunit C (99 aa).

This sequence belongs to the GatC family. In terms of assembly, heterotrimer of A, B and C subunits.

It carries out the reaction L-glutamyl-tRNA(Gln) + L-glutamine + ATP + H2O = L-glutaminyl-tRNA(Gln) + L-glutamate + ADP + phosphate + H(+). The enzyme catalyses L-aspartyl-tRNA(Asn) + L-glutamine + ATP + H2O = L-asparaginyl-tRNA(Asn) + L-glutamate + ADP + phosphate + 2 H(+). Its function is as follows. Allows the formation of correctly charged Asn-tRNA(Asn) or Gln-tRNA(Gln) through the transamidation of misacylated Asp-tRNA(Asn) or Glu-tRNA(Gln) in organisms which lack either or both of asparaginyl-tRNA or glutaminyl-tRNA synthetases. The reaction takes place in the presence of glutamine and ATP through an activated phospho-Asp-tRNA(Asn) or phospho-Glu-tRNA(Gln). The sequence is that of Aspartyl/glutamyl-tRNA(Asn/Gln) amidotransferase subunit C from Burkholderia lata (strain ATCC 17760 / DSM 23089 / LMG 22485 / NCIMB 9086 / R18194 / 383).